Reading from the N-terminus, the 346-residue chain is Peroxidase 9 (346 aa).

The first 23 residues, Met-1–Ala-23, serve as a signal peptide directing secretion. 4 cysteine pairs are disulfide-bonded: Cys-54/Cys-134, Cys-87/Cys-92, Cys-140/Cys-342, and Cys-219/Cys-251. His-85 acts as the Proton acceptor in catalysis. Ca(2+)-binding residues include Asp-86, Val-89, Gly-91, Asp-93, and Ser-95. Residue Pro-182 coordinates substrate. Asn-185 carries N-linked (GlcNAc...) asparagine glycosylation. His-212 provides a ligand contact to heme b. Residue Thr-213 coordinates Ca(2+). Ca(2+)-binding residues include Asp-264, Ser-267, and Asp-272.

Belongs to the peroxidase family. Classical plant (class III) peroxidase subfamily. Heme b is required as a cofactor. Ca(2+) serves as cofactor.

It localises to the secreted. The catalysed reaction is 2 a phenolic donor + H2O2 = 2 a phenolic radical donor + 2 H2O. Removal of H(2)O(2), oxidation of toxic reductants, biosynthesis and degradation of lignin, suberization, auxin catabolism, response to environmental stresses such as wounding, pathogen attack and oxidative stress. These functions might be dependent on each isozyme/isoform in each plant tissue. The protein is Peroxidase 9 (PER9) of Arabidopsis thaliana (Mouse-ear cress).